Reading from the N-terminus, the 608-residue chain is Epsin-3 (608 aa).

A 1,2-diacyl-sn-glycero-3-phospho-(1D-myo-inositol-4,5-bisphosphate)-binding residues include Arg8, Lys11, Arg25, Asn30, Arg63, and His73. The ENTH domain occupies 12–144 (NIVHNYSEAE…KDEERLRQER (133 aa)). Disordered regions lie at residues 150–266 (TKER…QSSI) and 281–475 (STHC…GPSA). A compositionally biased stretch (low complexity) spans 174–189 (GSPSSYTSASSSPRYA). A phosphoserine mark is found at Ser184 and Ser185. The UIM domain occupies 202–221 (EEELQLQLALAMSREEAEKG). Composition is skewed to basic and acidic residues over residues 214–229 (SREEAEKGGRSWKGDD) and 240–260 (GQRRRDREPEREERKEEEKLK). 7 repeat units span residues 287 to 289 (DPW), 310 to 312 (DPW), 337 to 339 (EPW), 353 to 355 (DPW), 370 to 372 (DPW), 495 to 497 (NPF), and 508 to 510 (NPF). A 5 X 3 AA repeats of [DE]-P-W region spans residues 287–372 (DPWDIPGLRP…KLPSTGVDPW (86 aa)). A compositionally biased stretch (pro residues) spans 346 to 363 (PSGPPITDPWAPSSPTPK). The 3 X 3 AA repeats of N-P-F stretch occupies residues 495–607 (NPFLTGLSAP…LPPQAGTNPF (113 aa)). 2 disordered regions span residues 498–530 (LTGLSAPSPTNPFGAGEQGRPTLNQMRTGSPAL) and 575–608 (GAFAPPPASLPQPLLPTSDPVGPLPPQAGTNPFL). Residues 578–588 (APPPASLPQPL) are compositionally biased toward pro residues. Copy 3 of the repeat occupies 605–607 (NPF).

The protein belongs to the epsin family.

It is found in the cytoplasm. The protein resides in the cell cortex. Its subcellular location is the perinuclear region. It localises to the cytoplasmic vesicle. The protein localises to the clathrin-coated vesicle. It is found in the nucleus. The chain is Epsin-3 (Epn3) from Rattus norvegicus (Rat).